We begin with the raw amino-acid sequence, 621 residues long: Chaperone protein DnaK (621 aa).

Threonine 179 carries the post-translational modification Phosphothreonine; by autocatalysis. Polar residues predominate over residues 583-605 (SQVQDTQGAAQGQSQGNPQQTAD). Residues 583–621 (SQVQDTQGAAQGQSQGNPQQTADNRGKVVDAEIVDENKE) are disordered. A compositionally biased stretch (basic and acidic residues) spans 606 to 621 (NRGKVVDAEIVDENKE).

Belongs to the heat shock protein 70 family.

Acts as a chaperone. The chain is Chaperone protein DnaK from Endomicrobium trichonymphae.